Consider the following 143-residue polypeptide: Hemoglobin subunit alpha (143 aa).

Positions 2-143 (SLTARDKSVV…LSAALADKYR (142 aa)) constitute a Globin domain. O2 is bound at residue H60. A heme b-binding site is contributed by H89.

It belongs to the globin family. Heterotetramer of two alpha chains and two beta chains. As to expression, red blood cells.

Its function is as follows. Involved in oxygen transport from gills to the various peripheral tissues. This is Hemoglobin subunit alpha (hba) from Salmo salar (Atlantic salmon).